Consider the following 105-residue polypeptide: Phosphoribosyl-AMP cyclohydrolase (105 aa).

Residue Asp72 participates in Mg(2+) binding. Position 73 (Cys73) interacts with Zn(2+). Residues Asp74 and Asp76 each contribute to the Mg(2+) site. Zn(2+) contacts are provided by Cys89 and Cys96.

The protein belongs to the PRA-CH family. Homodimer. Requires Mg(2+) as cofactor. It depends on Zn(2+) as a cofactor.

It is found in the cytoplasm. The enzyme catalyses 1-(5-phospho-beta-D-ribosyl)-5'-AMP + H2O = 1-(5-phospho-beta-D-ribosyl)-5-[(5-phospho-beta-D-ribosylamino)methylideneamino]imidazole-4-carboxamide. Its pathway is amino-acid biosynthesis; L-histidine biosynthesis; L-histidine from 5-phospho-alpha-D-ribose 1-diphosphate: step 3/9. In terms of biological role, catalyzes the hydrolysis of the adenine ring of phosphoribosyl-AMP. The protein is Phosphoribosyl-AMP cyclohydrolase of Listeria monocytogenes serovar 1/2a (strain ATCC BAA-679 / EGD-e).